The primary structure comprises 126 residues: Prefoldin subunit beta (126 aa).

Belongs to the prefoldin subunit beta family. Heterohexamer of two alpha and four beta subunits.

Its subcellular location is the cytoplasm. In terms of biological role, molecular chaperone capable of stabilizing a range of proteins. Seems to fulfill an ATP-independent, HSP70-like function in archaeal de novo protein folding. The protein is Prefoldin subunit beta of Methanocella arvoryzae (strain DSM 22066 / NBRC 105507 / MRE50).